Here is a 148-residue protein sequence, read N- to C-terminus: Large ribosomal subunit protein bL9 (148 aa).

Part of the 50S ribosomal subunit.

Functionally, binds to the 23S rRNA. Extends more that 50 Angstroms beyond the surface of the 70S ribosome. This Thermus thermophilus (strain ATCC 27634 / DSM 579 / HB8) protein is Large ribosomal subunit protein bL9 (rplI).